The following is a 238-amino-acid chain: Orotidine 5'-phosphate decarboxylase (238 aa).

Residues D10, K32, 59 to 68, T122, R184, Q193, G213, and R214 contribute to the substrate site; that span reads DLKLHDIPNT. The Proton donor role is filled by K61.

It belongs to the OMP decarboxylase family. Type 1 subfamily. In terms of assembly, homodimer.

The catalysed reaction is orotidine 5'-phosphate + H(+) = UMP + CO2. It participates in pyrimidine metabolism; UMP biosynthesis via de novo pathway; UMP from orotate: step 2/2. Its function is as follows. Catalyzes the decarboxylation of orotidine 5'-monophosphate (OMP) to uridine 5'-monophosphate (UMP). This chain is Orotidine 5'-phosphate decarboxylase, found in Bacillus mycoides (strain KBAB4) (Bacillus weihenstephanensis).